We begin with the raw amino-acid sequence, 554 residues long: Phospho-2-dehydro-3-deoxyheptonate aldolase 1, chloroplastic (554 aa).

The N-terminal 39 residues, 1-39, are a transit peptide targeting the chloroplast; sequence MSLATSSSMAGGAAVVPRSATATTASAFVTMKRRATAVR. Residues 41-70 are disordered; that stretch reads VHAAEPSKNPPVGVPSAAKTSSPSVAAPEK.

This sequence belongs to the class-II DAHP synthase family.

It localises to the plastid. It is found in the chloroplast. It carries out the reaction D-erythrose 4-phosphate + phosphoenolpyruvate + H2O = 7-phospho-2-dehydro-3-deoxy-D-arabino-heptonate + phosphate. It participates in metabolic intermediate biosynthesis; chorismate biosynthesis; chorismate from D-erythrose 4-phosphate and phosphoenolpyruvate: step 1/7. This chain is Phospho-2-dehydro-3-deoxyheptonate aldolase 1, chloroplastic (DAHPS1), found in Oryza sativa subsp. japonica (Rice).